The primary structure comprises 55 residues: Cytochrome c oxidase subunit 7s (55 aa).

Residues 13–35 (LVQDIGVALILGSIAGCFFKYGV) form a helical membrane-spanning segment.

Slime mold cytochrome c oxidase consists of at least seven different polypeptides species, subunits I, II, III, IV, V, VI, and VIIe/s in order of MW.

It is found in the mitochondrion inner membrane. It carries out the reaction 4 Fe(II)-[cytochrome c] + O2 + 8 H(+)(in) = 4 Fe(III)-[cytochrome c] + 2 H2O + 4 H(+)(out). Its function is as follows. This protein is one of the nuclear-coded polypeptide chains of cytochrome c oxidase, the terminal oxidase in mitochondrial electron transport. The sequence is that of Cytochrome c oxidase subunit 7s (cxgS) from Dictyostelium discoideum (Social amoeba).